We begin with the raw amino-acid sequence, 260 residues long: Thiazole synthase (260 aa).

Residue Lys-96 is the Schiff-base intermediate with DXP of the active site. Residues Gly-157, 184–185 (AG), and 206–207 (NT) each bind 1-deoxy-D-xylulose 5-phosphate.

The protein belongs to the ThiG family. Homotetramer. Forms heterodimers with either ThiH or ThiS.

The protein resides in the cytoplasm. It carries out the reaction [ThiS sulfur-carrier protein]-C-terminal-Gly-aminoethanethioate + 2-iminoacetate + 1-deoxy-D-xylulose 5-phosphate = [ThiS sulfur-carrier protein]-C-terminal Gly-Gly + 2-[(2R,5Z)-2-carboxy-4-methylthiazol-5(2H)-ylidene]ethyl phosphate + 2 H2O + H(+). It participates in cofactor biosynthesis; thiamine diphosphate biosynthesis. Its function is as follows. Catalyzes the rearrangement of 1-deoxy-D-xylulose 5-phosphate (DXP) to produce the thiazole phosphate moiety of thiamine. Sulfur is provided by the thiocarboxylate moiety of the carrier protein ThiS. In vitro, sulfur can be provided by H(2)S. This chain is Thiazole synthase, found in Rhodopseudomonas palustris (strain TIE-1).